We begin with the raw amino-acid sequence, 101 residues long: Phosphoribosyl-AMP cyclohydrolase (101 aa).

Residue aspartate 71 participates in Mg(2+) binding. Residue cysteine 72 participates in Zn(2+) binding. Mg(2+) contacts are provided by aspartate 73 and aspartate 75. Zn(2+) contacts are provided by cysteine 88 and cysteine 95.

It belongs to the PRA-CH family. As to quaternary structure, homodimer. Mg(2+) serves as cofactor. It depends on Zn(2+) as a cofactor.

It localises to the cytoplasm. The enzyme catalyses 1-(5-phospho-beta-D-ribosyl)-5'-AMP + H2O = 1-(5-phospho-beta-D-ribosyl)-5-[(5-phospho-beta-D-ribosylamino)methylideneamino]imidazole-4-carboxamide. Its pathway is amino-acid biosynthesis; L-histidine biosynthesis; L-histidine from 5-phospho-alpha-D-ribose 1-diphosphate: step 3/9. Its function is as follows. Catalyzes the hydrolysis of the adenine ring of phosphoribosyl-AMP. The polypeptide is Phosphoribosyl-AMP cyclohydrolase (Bacillus cytotoxicus (strain DSM 22905 / CIP 110041 / 391-98 / NVH 391-98)).